The chain runs to 300 residues: Forkhead transcription factor fkh-9 (300 aa).

A DNA-binding region (fork-head) is located at residues 66–161; it reads RPSLSYKDLI…DKQTLRRRNR (96 aa). The interval 153 to 208 is disordered; the sequence is KQTLRRRNRQQPRALAKKSDAGRTLSRDDRGSSGSGETSPSPSQPSISPPNENPMP. Residues 169 to 183 show a composition bias toward basic and acidic residues; sequence KKSDAGRTLSRDDRG. Over residues 187–198 the composition is skewed to low complexity; that stretch reads SGETSPSPSQPS.

In terms of tissue distribution, expressed in mechanosensory neurons.

It is found in the nucleus. Functionally, transcription factor. Binds to the regulatory elements of genes that contain the sequence motif 5'-TTGTTTCT-3'. Involved in regulating intestinal transcription of vitellogenin vit-2, acting in concert with transcription factors elt-2, mab-3 and daf-16, and also the TGF-beta/Sma/Mab pathway. Functions downstream of the insulin/IGF-1-like signaling (IIS) mediated pathway, in regeneration of axons after injury and in short-term memory, perhaps acting in neurons, and in modulation of longevity, perhaps acting non-neuronally. Plays a role in the modulation of endoplasmic reticulum (ER) homeostasis during chemical and pathogen stress, including exposure to the Gram-negative bacterium P.aeruginosa. This chain is Forkhead transcription factor fkh-9, found in Caenorhabditis elegans.